A 308-amino-acid chain; its full sequence is Polyprenyl-phosphate transporter (308 aa).

8 helical membrane passes run 15–35 (GLAM…IAFI), 69–89 (INGL…ATLA), 91–111 (LISW…FGLI), 130–150 (LLWL…KPLH), 163–183 (AIAI…LLLI), 200–220 (ILLI…HILS), 228–248 (DVTL…IWPW), and 282–302 (PSQW…VLGL).

Belongs to the PopT family.

It localises to the cell inner membrane. Active in alkaline conditions. In terms of biological role, flippase that catalyzes the transport of undecaprenyl phosphate (UndP) across the cytoplasmic membrane, from the external side to the cytoplasmic side. Is involved in UndP recycling during peptidoglycan synthesis. Required for cell shape maintenance at alkaline pH and peptidoglycan maintenance. Required by the cholera pathogen for growth and cell shape maintenance in the intestine. The protein is Polyprenyl-phosphate transporter of Vibrio cholerae serotype O1 (strain ATCC 39315 / El Tor Inaba N16961).